The following is a 225-amino-acid chain: Golgi to ER traffic protein 1 (225 aa).

Residue Met1 is a topological domain, lumenal. The helical transmembrane segment at 2-21 (NWVIIAALFFVIINKLLQYT) threads the bilayer. The Cytoplasmic portion of the chain corresponds to 22–107 (SRYQEAWINK…SQSKLFNRLK (86 aa)). Positions 37 to 104 (DISSLSKEYS…AKDSQSKLFN (68 aa)) form a coiled coil. Residues 108–128 (LLTLTLPFMILKLWKGKFIVY) traverse the membrane as a helical segment. Topologically, residues 129–172 (DIPTKDTFPVIVNGVLSQGLLYIPLLPINFLRGIDPNKHILVPG) are lumenal. The helical transmembrane segment at 173-189 (VSLGIWLMALTKTIDTV) threads the bilayer. Over 190–225 (EFIVKQLVFQPVVSKQVKEKTKEKVVELKTTEAELD) the chain is Cytoplasmic.

Belongs to the WRB/GET1 family. In terms of assembly, component of the Golgi to ER traffic (GET) complex, which is composed of GET1, GET2 and GET3. Within the complex, GET1 and GET2 form a heterotetramer which is stabilized by phosphatidylinositol binding and which binds to the GET3 homodimer.

It is found in the endoplasmic reticulum membrane. Its subcellular location is the golgi apparatus membrane. Its function is as follows. Required for the post-translational delivery of tail-anchored (TA) proteins to the endoplasmic reticulum. Together with GET2, acts as a membrane receptor for soluble GET3, which recognizes and selectively binds the transmembrane domain of TA proteins in the cytosol. The GET complex cooperates with the HDEL receptor ERD2 to mediate the ATP-dependent retrieval of resident ER proteins that contain a C-terminal H-D-E-L retention signal from the Golgi to the ER. This is Golgi to ER traffic protein 1 from Vanderwaltozyma polyspora (strain ATCC 22028 / DSM 70294 / BCRC 21397 / CBS 2163 / NBRC 10782 / NRRL Y-8283 / UCD 57-17) (Kluyveromyces polysporus).